Consider the following 701-residue polypeptide: MNPVIKTFQFGQSTVTLETGRIARQATGAVLVTVDNDVTVLVTVVGAKQADPGKGFFPLSVHYQEKTYAAGKIPGGFFKREGRPSEKETLTSRLIDRPIRPLFPEGFMNEVQVVCTVVSTSKKTDPDIAAMIGTSAALAISGIPFEGPIGAARVAFHESTGYLLNPTYEQLAASSLDMVVAGTSDAVLMVESEAQELTEDQMLGAVLFAHDEFQAVIKAVKELAAEAAKPTWDWKPADKNSALFDAIRAEFGEAVSQGYTITVKADRYARLGELRDQAVAKFSGEEGQPSAGEVKDIFGEIEYRTVRENIVNGKPRIDGRDTKTVRPLNIEVGVLPKTHGSALFTRGETQALVVATLGTARDAQLLDTLEGEKKDPFMLHYNFPPFSVGECGRMGGAGRREIGHGRLARRSVQAMLPAADVFPYTIRVVSEITESNGSSSMASVCGASLALMDAGVPMKAPVAGIAMGLVKEGEKFAVLTDILGDEDHLGDMDFKVAGTAKGVTALQMDIKINGITEEIMEIALGQALEARLNILGQMNQIIGESRTELSANAPTMIAMKIDTDKIRDVIGKGGATIRAICEETKASIDIEDDGSIKIFGETKEAADAAKQRILGITAEAEIGKIYVGKVERIVDFGAFVNILPGKDGLVHISMLSDARVEKVTDVLKEGQEVEVLVLDVDNRGRIKLSIKDVAAAKASGV.

Mg(2+) contacts are provided by Asp-487 and Asp-493. The KH domain occupies 554–613 (PTMIAMKIDTDKIRDVIGKGGATIRAICEETKASIDIEDDGSIKIFGETKEAADAAKQRI). The S1 motif domain occupies 623–691 (GKIYVGKVER…NRGRIKLSIK (69 aa)).

It belongs to the polyribonucleotide nucleotidyltransferase family. Component of the RNA degradosome, which is a multiprotein complex involved in RNA processing and mRNA degradation. Requires Mg(2+) as cofactor.

It localises to the cytoplasm. The enzyme catalyses RNA(n+1) + phosphate = RNA(n) + a ribonucleoside 5'-diphosphate. Involved in mRNA degradation. Catalyzes the phosphorolysis of single-stranded polyribonucleotides processively in the 3'- to 5'-direction. This is Polyribonucleotide nucleotidyltransferase from Pseudomonas entomophila (strain L48).